A 238-amino-acid chain; its full sequence is MNTLPVKQSQLINPIAAPEVPQELQENIILTSLNDVYSWCRLSSLWPLMYGTACCFIEFAAMIGSRFDFDRFGLVPRCSPRQADLLITAGTITMKMAPALVKLYEQMPEPKYVIAMGACTITGGMFSTDSPTAVRGVDKLIPVDIYLPGCPPRPEAIMDAIVKLRKKIGNEHLDERGQLQQTHRFHSVKHGMKSVAPILTGEYLAAPTRQAPPQQLAEALGLPLPALEAIEKEAVERN.

The [4Fe-4S] cluster site is built by C54, C55, C119, and C150.

Belongs to the complex I 20 kDa subunit family. As to quaternary structure, NDH-1 can be composed of about 15 different subunits; different subcomplexes with different compositions have been identified which probably have different functions. [4Fe-4S] cluster serves as cofactor.

It localises to the cellular thylakoid membrane. The enzyme catalyses a plastoquinone + NADH + (n+1) H(+)(in) = a plastoquinol + NAD(+) + n H(+)(out). It catalyses the reaction a plastoquinone + NADPH + (n+1) H(+)(in) = a plastoquinol + NADP(+) + n H(+)(out). NDH-1 shuttles electrons from an unknown electron donor, via FMN and iron-sulfur (Fe-S) centers, to quinones in the respiratory and/or the photosynthetic chain. The immediate electron acceptor for the enzyme in this species is believed to be plastoquinone. Couples the redox reaction to proton translocation, and thus conserves the redox energy in a proton gradient. Cyanobacterial NDH-1 also plays a role in inorganic carbon-concentration. The protein is NAD(P)H-quinone oxidoreductase subunit K 1 of Cyanothece sp. (strain PCC 7425 / ATCC 29141).